A 201-amino-acid chain; its full sequence is Orotate phosphoribosyltransferase (201 aa).

113 to 121 (EDIITTGKS) lines the 5-phospho-alpha-D-ribose 1-diphosphate pocket. Residues T117 and R145 each contribute to the orotate site.

Belongs to the purine/pyrimidine phosphoribosyltransferase family. PyrE subfamily. As to quaternary structure, homodimer. It depends on Mg(2+) as a cofactor.

The catalysed reaction is orotidine 5'-phosphate + diphosphate = orotate + 5-phospho-alpha-D-ribose 1-diphosphate. It functions in the pathway pyrimidine metabolism; UMP biosynthesis via de novo pathway; UMP from orotate: step 1/2. Its function is as follows. Catalyzes the transfer of a ribosyl phosphate group from 5-phosphoribose 1-diphosphate to orotate, leading to the formation of orotidine monophosphate (OMP). In Helicobacter pylori (strain P12), this protein is Orotate phosphoribosyltransferase.